The chain runs to 155 residues: SsrA-binding protein (155 aa).

The protein belongs to the SmpB family.

It is found in the cytoplasm. In terms of biological role, required for rescue of stalled ribosomes mediated by trans-translation. Binds to transfer-messenger RNA (tmRNA), required for stable association of tmRNA with ribosomes. tmRNA and SmpB together mimic tRNA shape, replacing the anticodon stem-loop with SmpB. tmRNA is encoded by the ssrA gene; the 2 termini fold to resemble tRNA(Ala) and it encodes a 'tag peptide', a short internal open reading frame. During trans-translation Ala-aminoacylated tmRNA acts like a tRNA, entering the A-site of stalled ribosomes, displacing the stalled mRNA. The ribosome then switches to translate the ORF on the tmRNA; the nascent peptide is terminated with the 'tag peptide' encoded by the tmRNA and targeted for degradation. The ribosome is freed to recommence translation, which seems to be the essential function of trans-translation. The chain is SsrA-binding protein from Bacillus cereus (strain ATCC 10987 / NRS 248).